We begin with the raw amino-acid sequence, 865 residues long: Envelope glycoprotein gp160 (865 aa).

Residues 1 to 20 (MRYTIITLGIIVIGIGIVLS) form the signal peptide. Residues 21 to 705 (KQWITVFYGI…SKWLNILKMG (685 aa)) are Extracellular-facing. N-linked (GlcNAc...) asparagine; by host glycosylation occurs at asparagine 35. The cysteines at positions 42 and 55 are disulfide-linked. Residues asparagine 68, asparagine 117, asparagine 150, asparagine 165, asparagine 195, asparagine 198, asparagine 210, asparagine 252, asparagine 255, asparagine 266, asparagine 276, asparagine 282, asparagine 294, asparagine 306, asparagine 316, asparagine 373, asparagine 414, asparagine 451, asparagine 488, and asparagine 491 are each glycosylated (N-linked (GlcNAc...) asparagine; by host). Cystine bridges form between cysteine 101–cysteine 218, cysteine 108–cysteine 209, cysteine 113–cysteine 166, cysteine 231–cysteine 261, and cysteine 241–cysteine 253. A V1 region spans residues 113–165 (CVELNSTRERATTPTTTPKSTGLPCVGPTSGENLQSCNASIIEREMEDEPASN). A V2 region spans residues 166–209 (CTFAMAGYVRDQKKNYYSVVWNDAEIYCKNKTNSTSKECYMIHC). The segment at 311–343 (CRRPGNKTVLPVTIMAGLVFHSQKYNMKLRQAW) is V3. Cysteine 311 and cysteine 344 are joined by a disulfide. Cysteine 396 and cysteine 471 are joined by a disulfide. The segment at 403 to 444 (CKMDWFLNYLNNKTWDAYHNFCSSKKKGHAPGPCVQRTYVAY) is V4. The V5 stretch occupies residues 487-494 (KNRTNVTL). Residues 537–557 (VPFVLGFLGFLGAAGTAMGAA) form a fusion peptide region. The immunosuppression stretch occupies residues 600 to 616 (LNARVTALEKYLEDQAR). 2 N-linked (GlcNAc...) asparagine; by host glycosylation sites follow: asparagine 645 and asparagine 661. Residues 650–675 (EWERQIADLESNITGQLVKAREQEEK) are a coiled coil. Residues 682–703 (KLTSWSDFWSWFDFSKWLNILK) form an MPER; binding to GalCer region. The helical transmembrane segment at 706–726 (FLVIVGIIGLRLLYTVYGCIV) threads the bilayer. Topologically, residues 727–865 (RVRQGYVPLS…VRQGLEEILN (139 aa)) are cytoplasmic. Residues 732-735 (YVPL) carry the YXXL motif; contains endocytosis signal motif. Residues 744-763 (VGKGRPDNADEPGEGGDNSR) are disordered.

In terms of assembly, the mature envelope protein (Env) consists of a homotrimer of non-covalently associated gp120-gp41 heterodimers. The resulting complex protrudes from the virus surface as a spike. Interacts with host CD4 and CCR5. Gp120 also interacts with the C-type lectins CD209/DC-SIGN and CLEC4M/DC-SIGNR (collectively referred to as DC-SIGN(R)). The mature envelope protein (Env) consists of a homotrimer of non-covalently associated gp120-gp41 heterodimers. The resulting complex protrudes from the virus surface as a spike. Specific enzymatic cleavages in vivo yield mature proteins. Envelope glycoproteins are synthesized as an inactive precursor that is heavily N-glycosylated and processed likely by host cell furin in the Golgi to yield the mature SU and TM proteins. The cleavage site between SU and TM requires the minimal sequence [KR]-X-[KR]-R.

The protein resides in the virion membrane. It is found in the host cell membrane. It localises to the host endosome membrane. In terms of biological role, the surface protein gp120 (SU) attaches the virus to the host lymphoid cell by binding to the primary receptor CD4. This interaction induces a structural rearrangement creating a high affinity binding site for a chemokine coreceptor like CCR5. This peculiar 2 stage receptor-interaction strategy allows gp120 to maintain the highly conserved coreceptor-binding site in a cryptic conformation, protected from neutralizing antibodies. These changes are transmitted to the transmembrane protein gp41 and are thought to activate its fusogenic potential by unmasking its fusion peptide. Its function is as follows. Surface protein gp120 (SU) may target the virus to gut-associated lymphoid tissue (GALT) by binding host ITGA4/ITGB7 (alpha-4/beta-7 integrins), a complex that mediates T-cell migration to the GALT. Interaction between gp120 and ITGA4/ITGB7 would allow the virus to enter GALT early in the infection, infecting and killing most of GALT's resting CD4+ T-cells. This T-cell depletion is believed to be the major insult to the host immune system leading to AIDS. Functionally, the surface protein gp120 is a ligand for CD209/DC-SIGN and CLEC4M/DC-SIGNR, which are respectively found on dendritic cells (DCs), and on endothelial cells of liver sinusoids and lymph node sinuses. These interactions allow capture of viral particles at mucosal surfaces by these cells and subsequent transmission to permissive cells. DCs are professional antigen presenting cells, critical for host immunity by inducing specific immune responses against a broad variety of pathogens. They act as sentinels in various tissues where they take up antigen, process it, and present it to T-cells following migration to lymphoid organs. SIV subverts the migration properties of dendritic cells to gain access to CD4+ T-cells in lymph nodes. Virus transmission to permissive T-cells occurs either in trans (without DCs infection, through viral capture and transmission), or in cis (following DCs productive infection, through the usual CD4-gp120 interaction), thereby inducing a robust infection. In trans infection, bound virions remain infectious over days and it is proposed that they are not degraded, but protected in non-lysosomal acidic organelles within the DCs close to the cell membrane thus contributing to the viral infectious potential during DCs' migration from the periphery to the lymphoid tissues. On arrival at lymphoid tissues, intact virions recycle back to DCs' cell surface allowing virus transmission to CD4+ T-cells. Virion capture also seems to lead to MHC-II-restricted viral antigen presentation, and probably to the activation of SIV-specific CD4+ cells. The transmembrane protein gp41 (TM) acts as a class I viral fusion protein. Under the current model, the protein has at least 3 conformational states: pre-fusion native state, pre-hairpin intermediate state, and post-fusion hairpin state. During fusion of viral and target intracellular membranes, the coiled coil regions (heptad repeats) assume a trimer-of-hairpins structure, positioning the fusion peptide in close proximity to the C-terminal region of the ectodomain. The formation of this structure appears to drive apposition and subsequent fusion of viral and target cell membranes. Complete fusion occurs in host cell endosomes. The virus undergoes clathrin-dependent internalization long before endosomal fusion, thus minimizing the surface exposure of conserved viral epitopes during fusion and reducing the efficacy of inhibitors targeting these epitopes. Membranes fusion leads to delivery of the nucleocapsid into the cytoplasm. In terms of biological role, the envelope glycoprotein gp160 precursor down-modulates cell surface CD4 antigen by interacting with it in the endoplasmic reticulum and blocking its transport to the cell surface. Its function is as follows. The gp120-gp41 heterodimer allows rapid transcytosis of the virus through CD4 negative cells such as simple epithelial monolayers of the intestinal, rectal and endocervical epithelial barriers. Both gp120 and gp41 specifically recognize glycosphingolipids galactosyl-ceramide (GalCer) or 3' sulfo-galactosyl-ceramide (GalS) present in the lipid rafts structures of epithelial cells. Binding to these alternative receptors allows the rapid transcytosis of the virus through the epithelial cells. This transcytotic vesicle-mediated transport of virions from the apical side to the basolateral side of the epithelial cells does not involve infection of the cells themselves. This Simian immunodeficiency virus agm.vervet (isolate AGM TYO-1) (SIV-agm.ver) protein is Envelope glycoprotein gp160 (env).